The chain runs to 1976 residues: DNA-directed RNA polymerase V subunit 1 (1976 aa).

Residues Cys57, Cys60, Cys68, His71, Cys98, and Cys101 each contribute to the Zn(2+) site. Residues Asp449, Asp451, and Asp453 each contribute to the Mg(2+) site. The tract at residues 751-763 (PYEEMAHSIAARE) is bridging helix. Repeat unit 1 spans residues 1215 to 1216 (WG). Positions 1215–1693 (WGKRVDVGTG…AKKFPSSGGW (479 aa)) are 18 X 2 AA repeats of [WG]-[GW] repeats. 3 disordered regions span residues 1272–1291 (EEEMAEWAESPERDSALGEP), 1298–1718 (DFQN…EDNL), and 1847–1976 (FTKP…QTQT). Composition is skewed to basic and acidic residues over residues 1281 to 1291 (SPERDSALGEP) and 1298 to 1307 (DFQNLHDEGK). Residues 1329-1330 (WG) form repeat 2. Polar residues predominate over residues 1332 to 1348 (SKSTGGEANPESNWEKT). The span at 1349–1371 (TNVEKEDAWSSWNTRKDAQESSK) shows a compositional bias: basic and acidic residues. 15 repeat units span residues 1378–1379 (WG), 1415–1416 (WG), 1430–1431 (WG), 1439–1440 (WG), 1447–1448 (WG), 1464–1465 (WG), 1498–1499 (WG), 1528–1529 (WG), 1545–1546 (WG), 1562–1563 (WG), 1596–1597 (WG), 1604–1605 (WG), 1621–1622 (WG), 1638–1639 (WG), and 1641–1642 (WG). Residues 1415-1430 (WGHKSVSDKSWDKKNW) are compositionally biased toward basic and acidic residues. The span at 1491–1501 (TESNGATWGSS) shows a compositional bias: polar residues. The span at 1648-1678 (AEDKDTNEDDRNPWVSLKETKSREKDDKERS) shows a compositional bias: basic and acidic residues. 2 repeat units span residues 1680-1681 (WG) and 1692-1693 (GW). Polar residues predominate over residues 1869–1878 (EQSQPPNQSI). A compositionally biased stretch (low complexity) spans 1886-1976 (QTQTQSQSPS…SSQSPSQTQT (91 aa)).

Belongs to the RNA polymerase beta' chain family. In terms of assembly, component of the RNA polymerase V complex. Interacts with NRPD4, NRPD2A, and (via C-terminus) with AGO4. Interacts with SUVH2. As to expression, mostly expressed in flowers, and, to a lower extent, in leaves. Present in sperm cells.

The protein localises to the nucleus. It localises to the nucleolus. The enzyme catalyses RNA(n) + a ribonucleoside 5'-triphosphate = RNA(n+1) + diphosphate. DNA-dependent RNA polymerase catalyzes the transcription of DNA into RNA using the four ribonucleoside triphosphates as substrates. Largest and catalytic component of RNA polymerase V involved in RNA-directed DNA methylation-dependent (RdDM) silencing of endogenous repeated sequences, including transposable elements. Also required for full erasure of methylation when the RNA trigger is withdrawn. Seems also involved in the synthesis of short-interfering RNAs (siRNA). Essential component of a self-reinforcing loop coupling de novo DNA methylation to siRNA production. Involved in the maintenance of post-transcriptional RNA silencing. The sequence is that of DNA-directed RNA polymerase V subunit 1 (NRPE1) from Arabidopsis thaliana (Mouse-ear cress).